The sequence spans 154 residues: Myoglobin (154 aa).

The region spanning 2-148 is the Globin domain; sequence GLSDGEWQLV…FRNDIAAKYK (147 aa). Residue Ser4 is modified to Phosphoserine. Residue His65 coordinates nitrite. His65 lines the O2 pocket. Residue Thr68 is modified to Phosphothreonine. Residue His94 participates in heme b binding.

This sequence belongs to the globin family. Monomeric.

Its subcellular location is the cytoplasm. It is found in the sarcoplasm. It carries out the reaction Fe(III)-heme b-[protein] + nitric oxide + H2O = Fe(II)-heme b-[protein] + nitrite + 2 H(+). The catalysed reaction is H2O2 + AH2 = A + 2 H2O. In terms of biological role, monomeric heme protein which primary function is to store oxygen and facilitate its diffusion within muscle tissues. Reversibly binds oxygen through a pentacoordinated heme iron and enables its timely and efficient release as needed during periods of heightened demand. Depending on the oxidative conditions of tissues and cells, and in addition to its ability to bind oxygen, it also has a nitrite reductase activity whereby it regulates the production of bioactive nitric oxide. Under stress conditions, like hypoxia and anoxia, it also protects cells against reactive oxygen species thanks to its pseudoperoxidase activity. This is Myoglobin (MB) from Sciurus vulgaris (Eurasian red squirrel).